A 438-amino-acid polypeptide reads, in one-letter code: Glutamyl-tRNA reductase (438 aa).

Residues 49–52 (TCNR), serine 109, 114–116 (EQQ), and glutamine 120 contribute to the substrate site. The Nucleophile role is filled by cysteine 50. 191 to 196 (GAGAMA) serves as a coordination point for NADP(+).

Belongs to the glutamyl-tRNA reductase family. Homodimer.

It carries out the reaction (S)-4-amino-5-oxopentanoate + tRNA(Glu) + NADP(+) = L-glutamyl-tRNA(Glu) + NADPH + H(+). The protein operates within porphyrin-containing compound metabolism; protoporphyrin-IX biosynthesis; 5-aminolevulinate from L-glutamyl-tRNA(Glu): step 1/2. Functionally, catalyzes the NADPH-dependent reduction of glutamyl-tRNA(Glu) to glutamate 1-semialdehyde (GSA). This Corynebacterium diphtheriae (strain ATCC 700971 / NCTC 13129 / Biotype gravis) protein is Glutamyl-tRNA reductase.